Consider the following 357-residue polypeptide: Protein RecA (357 aa).

73 to 80 (GPESSGKT) serves as a coordination point for ATP.

The protein belongs to the RecA family.

The protein resides in the cytoplasm. In terms of biological role, can catalyze the hydrolysis of ATP in the presence of single-stranded DNA, the ATP-dependent uptake of single-stranded DNA by duplex DNA, and the ATP-dependent hybridization of homologous single-stranded DNAs. It interacts with LexA causing its activation and leading to its autocatalytic cleavage. This Nitratidesulfovibrio vulgaris (strain DSM 19637 / Miyazaki F) (Desulfovibrio vulgaris) protein is Protein RecA.